Reading from the N-terminus, the 318-residue chain is Biotin synthase (318 aa).

The 221-residue stretch at 40-260 folds into the Radical SAM core domain; sequence DDIQKASLLS…VATARIIMPL (221 aa). Cys-55, Cys-59, and Cys-62 together coordinate [4Fe-4S] cluster. [2Fe-2S] cluster contacts are provided by Cys-100, Cys-132, Cys-192, and Arg-264.

This sequence belongs to the radical SAM superfamily. Biotin synthase family. In terms of assembly, homodimer. [4Fe-4S] cluster serves as cofactor. It depends on [2Fe-2S] cluster as a cofactor.

It carries out the reaction (4R,5S)-dethiobiotin + (sulfur carrier)-SH + 2 reduced [2Fe-2S]-[ferredoxin] + 2 S-adenosyl-L-methionine = (sulfur carrier)-H + biotin + 2 5'-deoxyadenosine + 2 L-methionine + 2 oxidized [2Fe-2S]-[ferredoxin]. It functions in the pathway cofactor biosynthesis; biotin biosynthesis; biotin from 7,8-diaminononanoate: step 2/2. Catalyzes the conversion of dethiobiotin (DTB) to biotin by the insertion of a sulfur atom into dethiobiotin via a radical-based mechanism. This Ruegeria pomeroyi (strain ATCC 700808 / DSM 15171 / DSS-3) (Silicibacter pomeroyi) protein is Biotin synthase.